The following is a 237-amino-acid chain: LexA repressor (237 aa).

Residues 26–46 constitute a DNA-binding region (H-T-H motif); the sequence is FDEMKDALDLRSKSGIHRLIT. Catalysis depends on for autocatalytic cleavage activity residues Ser-158 and Lys-196.

The protein belongs to the peptidase S24 family. As to quaternary structure, homodimer.

It carries out the reaction Hydrolysis of Ala-|-Gly bond in repressor LexA.. Functionally, represses a number of genes involved in the response to DNA damage (SOS response), including recA and lexA. In the presence of single-stranded DNA, RecA interacts with LexA causing an autocatalytic cleavage which disrupts the DNA-binding part of LexA, leading to derepression of the SOS regulon and eventually DNA repair. This is LexA repressor from Rhodopseudomonas palustris (strain BisB18).